The sequence spans 274 residues: Dermonecrotic toxin SdSicTox-betaIIB1bi (274 aa).

Residue His-5 is part of the active site. Residues Glu-25 and Asp-27 each contribute to the Mg(2+) site. His-41 serves as the catalytic Nucleophile. Cystine bridges form between Cys-45-Cys-51 and Cys-47-Cys-190. Asp-85 is a Mg(2+) binding site.

It belongs to the arthropod phospholipase D family. Class II subfamily. The cofactor is Mg(2+). Expressed by the venom gland.

It localises to the secreted. It catalyses the reaction an N-(acyl)-sphingosylphosphocholine = an N-(acyl)-sphingosyl-1,3-cyclic phosphate + choline. The enzyme catalyses an N-(acyl)-sphingosylphosphoethanolamine = an N-(acyl)-sphingosyl-1,3-cyclic phosphate + ethanolamine. The catalysed reaction is a 1-acyl-sn-glycero-3-phosphocholine = a 1-acyl-sn-glycero-2,3-cyclic phosphate + choline. It carries out the reaction a 1-acyl-sn-glycero-3-phosphoethanolamine = a 1-acyl-sn-glycero-2,3-cyclic phosphate + ethanolamine. Its function is as follows. Dermonecrotic toxins cleave the phosphodiester linkage between the phosphate and headgroup of certain phospholipids (sphingolipid and lysolipid substrates), forming an alcohol (often choline) and a cyclic phosphate. This toxin acts on sphingomyelin (SM). It may also act on ceramide phosphoethanolamine (CPE), lysophosphatidylcholine (LPC) and lysophosphatidylethanolamine (LPE), but not on lysophosphatidylserine (LPS), and lysophosphatidylglycerol (LPG). It acts by transphosphatidylation, releasing exclusively cyclic phosphate products as second products. Induces dermonecrosis, hemolysis, increased vascular permeability, edema, inflammatory response, and platelet aggregation. This is Dermonecrotic toxin SdSicTox-betaIIB1bi from Sicarius cf. damarensis (strain GJB-2008) (Six-eyed sand spider).